Reading from the N-terminus, the 442-residue chain is Histidine--tRNA ligase (442 aa).

This sequence belongs to the class-II aminoacyl-tRNA synthetase family. As to quaternary structure, homodimer.

Its subcellular location is the cytoplasm. The enzyme catalyses tRNA(His) + L-histidine + ATP = L-histidyl-tRNA(His) + AMP + diphosphate + H(+). This Wolinella succinogenes (strain ATCC 29543 / DSM 1740 / CCUG 13145 / JCM 31913 / LMG 7466 / NCTC 11488 / FDC 602W) (Vibrio succinogenes) protein is Histidine--tRNA ligase.